Reading from the N-terminus, the 206-residue chain is Thymidylate kinase (206 aa).

11–18 provides a ligand contact to ATP; sequence GPEGAGKT.

The protein belongs to the thymidylate kinase family.

The catalysed reaction is dTMP + ATP = dTDP + ADP. Phosphorylation of dTMP to form dTDP in both de novo and salvage pathways of dTTP synthesis. This chain is Thymidylate kinase (tmk), found in Deinococcus radiodurans (strain ATCC 13939 / DSM 20539 / JCM 16871 / CCUG 27074 / LMG 4051 / NBRC 15346 / NCIMB 9279 / VKM B-1422 / R1).